The chain runs to 644 residues: DNA mismatch repair protein MutL (644 aa).

The tract at residues 336 to 400 (ERPFEPSSPQ…EISRDSSLGE (65 aa)) is disordered. A compositionally biased stretch (basic and acidic residues) spans 373–400 (SKTHSTWDEASRVDTSRAEISRDSSLGE).

It belongs to the DNA mismatch repair MutL/HexB family.

Its function is as follows. This protein is involved in the repair of mismatches in DNA. It is required for dam-dependent methyl-directed DNA mismatch repair. May act as a 'molecular matchmaker', a protein that promotes the formation of a stable complex between two or more DNA-binding proteins in an ATP-dependent manner without itself being part of a final effector complex. The polypeptide is DNA mismatch repair protein MutL (Shewanella sp. (strain MR-7)).